We begin with the raw amino-acid sequence, 112 residues long: Large ribosomal subunit protein mL53 (112 aa).

The protein belongs to the mitochondrion-specific ribosomal protein mL53 family. Component of the mitochondrial large ribosomal subunit (mt-LSU). Mature mammalian 55S mitochondrial ribosomes consist of a small (28S) and a large (39S) subunit. The 28S small subunit contains a 12S ribosomal RNA (12S mt-rRNA) and 30 different proteins. The 39S large subunit contains a 16S rRNA (16S mt-rRNA), a copy of mitochondrial valine transfer RNA (mt-tRNA(Val)), which plays an integral structural role, and 52 different proteins. mL53 is located at the L7/L12 stalk.

Its subcellular location is the mitochondrion. This is Large ribosomal subunit protein mL53 (MRPL53) from Homo sapiens (Human).